A 530-amino-acid polypeptide reads, in one-letter code: Autoinducer-2 kinase (530 aa).

Belongs to the FGGY kinase family.

Its subcellular location is the cytoplasm. The catalysed reaction is (S)-4,5-dihydroxypentane-2,3-dione + ATP = (2S)-2-hydroxy-3,4-dioxopentyl phosphate + ADP + H(+). Its function is as follows. Catalyzes the phosphorylation of autoinducer-2 (AI-2) to phospho-AI-2, which subsequently inactivates the transcriptional regulator LsrR and leads to the transcription of the lsr operon. Phosphorylates the ring-open form of (S)-4,5-dihydroxypentane-2,3-dione (DPD), which is the precursor to all AI-2 signaling molecules, at the C5 position. The polypeptide is Autoinducer-2 kinase (Salmonella paratyphi A (strain ATCC 9150 / SARB42)).